The chain runs to 91 residues: Large ribosomal subunit protein bL27 (91 aa).

Residues 1–20 (MAHKKGVGSSKNGRDSNPKY) are disordered.

It belongs to the bacterial ribosomal protein bL27 family.

The protein is Large ribosomal subunit protein bL27 of Deinococcus geothermalis (strain DSM 11300 / CIP 105573 / AG-3a).